Reading from the N-terminus, the 469-residue chain is Trigger factor (469 aa).

The 86-residue stretch at 165–250 folds into the PPIase FKBP-type domain; it reads GDCVTIDYLG…VKAISKPDEL (86 aa). The segment covering 439–460 has biased composition (basic and acidic residues); it reads EYDESDLTEKKPEKKKGVEKTP. Positions 439–469 are disordered; it reads EYDESDLTEKKPEKKKGVEKTPIRKKAPKKG.

This sequence belongs to the FKBP-type PPIase family. Tig subfamily.

The protein resides in the cytoplasm. It catalyses the reaction [protein]-peptidylproline (omega=180) = [protein]-peptidylproline (omega=0). Involved in protein export. Acts as a chaperone by maintaining the newly synthesized protein in an open conformation. Functions as a peptidyl-prolyl cis-trans isomerase. This chain is Trigger factor, found in Bartonella quintana (strain Toulouse) (Rochalimaea quintana).